The sequence spans 349 residues: sn-glycerol-3-phosphate import ATP-binding protein UgpC (349 aa).

The ABC transporter domain occupies 4 to 235 (VTLTAVRKVY…PASTFVASFM (232 aa)). 37 to 44 (GPSGCGKS) provides a ligand contact to ATP.

Belongs to the ABC transporter superfamily. sn-glycerol-3-phosphate importer (TC 3.A.1.1.3) family. The complex is composed of two ATP-binding proteins (UgpC), two transmembrane proteins (UgpA and UgpE) and a solute-binding protein (UgpB).

The protein localises to the cell inner membrane. The enzyme catalyses sn-glycerol 3-phosphate(out) + ATP + H2O = sn-glycerol 3-phosphate(in) + ADP + phosphate + H(+). Its function is as follows. Part of the ABC transporter complex UgpBAEC involved in sn-glycerol-3-phosphate (G3P) import. Responsible for energy coupling to the transport system. In Jannaschia sp. (strain CCS1), this protein is sn-glycerol-3-phosphate import ATP-binding protein UgpC.